We begin with the raw amino-acid sequence, 203 residues long: Peptidyl-tRNA hydrolase (203 aa).

A tRNA-binding site is contributed by Tyr16. His21 (proton acceptor) is an active-site residue. 3 residues coordinate tRNA: Tyr68, Asn70, and Asn116.

This sequence belongs to the PTH family. As to quaternary structure, monomer.

Its subcellular location is the cytoplasm. The catalysed reaction is an N-acyl-L-alpha-aminoacyl-tRNA + H2O = an N-acyl-L-amino acid + a tRNA + H(+). Hydrolyzes ribosome-free peptidyl-tRNAs (with 1 or more amino acids incorporated), which drop off the ribosome during protein synthesis, or as a result of ribosome stalling. In terms of biological role, catalyzes the release of premature peptidyl moieties from peptidyl-tRNA molecules trapped in stalled 50S ribosomal subunits, and thus maintains levels of free tRNAs and 50S ribosomes. The sequence is that of Peptidyl-tRNA hydrolase from Nostoc sp. (strain PCC 7120 / SAG 25.82 / UTEX 2576).